The following is a 412-amino-acid chain: Subtilisin-like protease 6 (412 aa).

Residues 1–20 (MGFITKAIPIVLAALSTVNG) form the signal peptide. A propeptide spanning residues 21–126 (AKILEAGPHA…VVRTSTNGTN (106 aa)) is cleaved from the precursor. The Inhibitor I9 domain maps to 36–120 (KYIVVMKREV…YIEPDFVVRT (85 aa)). Residues Asn123 and Asn126 are each glycosylated (N-linked (GlcNAc...) asparagine). The Peptidase S8 domain maps to 135 to 412 (SWGLARVSSK…SKLIYNGSGK (278 aa)). Residues Asp167 and His198 each act as charge relay system in the active site. N-linked (GlcNAc...) asparagine glycosylation is found at Asn252 and Asn264. Ser358 functions as the Charge relay system in the catalytic mechanism. Asn408 carries an N-linked (GlcNAc...) asparagine glycan.

This sequence belongs to the peptidase S8 family.

Its subcellular location is the secreted. Its function is as follows. Secreted subtilisin-like serine protease with keratinolytic activity that contributes to pathogenicity. In Trichophyton equinum (Horse ringworm fungus), this protein is Subtilisin-like protease 6 (SUB6).